A 211-amino-acid polypeptide reads, in one-letter code: Mitotic spindle assembly checkpoint protein MAD2B (211 aa).

Residues 13–203 (QVVADILCEF…SDILKMQLYV (191 aa)) enclose the HORMA domain.

As to quaternary structure, homooligomer. Interacts with rev1. Interacts with rev3l. Interacts with fzr1 (in complex with the anaphase promoting complex APC). May interact with cdc20.

The protein localises to the nucleus. Its subcellular location is the cytoplasm. It localises to the cytoskeleton. The protein resides in the spindle. Its function is as follows. Adapter protein able to interact with different proteins and involved in different biological processes. Mediates the interaction between the error-prone DNA polymerase zeta catalytic subunit rev3l and the inserter polymerase rev1, thereby mediating the second polymerase switching in translesion DNA synthesis. Translesion DNA synthesis releases the replication blockade of replicative polymerases, stalled in presence of DNA lesions. May also play a role in signal transduction in response to DNA damage. May regulate the activation of the anaphase promoting complex APC thereby regulating progression through the cell cycle. Through transcriptional regulation may play a role in epithelial-mesenchymal transdifferentiation. The chain is Mitotic spindle assembly checkpoint protein MAD2B (mad2l2) from Danio rerio (Zebrafish).